The primary structure comprises 313 residues: Ribosomal RNA small subunit methyltransferase H (313 aa).

S-adenosyl-L-methionine-binding positions include 35 to 37, Asp55, Phe79, Asp101, and Gln108; that span reads GGH.

Belongs to the methyltransferase superfamily. RsmH family.

It is found in the cytoplasm. The catalysed reaction is cytidine(1402) in 16S rRNA + S-adenosyl-L-methionine = N(4)-methylcytidine(1402) in 16S rRNA + S-adenosyl-L-homocysteine + H(+). Its function is as follows. Specifically methylates the N4 position of cytidine in position 1402 (C1402) of 16S rRNA. The protein is Ribosomal RNA small subunit methyltransferase H of Shigella sonnei (strain Ss046).